We begin with the raw amino-acid sequence, 791 residues long: DNA repair and recombination protein RAD54-like (791 aa).

A compositionally biased stretch (polar residues) spans 1-20 (MRRSLAPSQRIGQSTASRNA). Residues 1–53 (MRRSLAPSQRIGQSTASRNAFTPPLLQKKNKRACQKDLRLDTDADEDKERKRF) form a disordered region. Residues 2 to 9 (RRSLAPSQ) form a required for chromatin remodeling, strand pairing activities and coupling of ATPase activity region. T22 is subject to Phosphothreonine. Basic and acidic residues predominate over residues 34–53 (CQKDLRLDTDADEDKERKRF). One can recognise a Helicase ATP-binding domain in the interval 175–349 (EGKKGDFNGC…FSLVNFVNPE (175 aa)). Residue 188–195 (DEMGLGKT) participates in ATP binding. The DEGH box signature appears at 300–303 (DEGH). The Helicase C-terminal domain maps to 506 to 663 (LLDFMLAAIR…NNESSEKHFT (158 aa)). Residues 747–791 (KEVVESPESAAAEAESVEEESQPTQRKRPSPPLSDDSADEDFIGF) are disordered. Positions 782–791 (DSADEDFIGF) are enriched in acidic residues.

Belongs to the SNF2/RAD54 helicase family. Interacts (via N-terminus) with spn-A/Rad51.

It is found in the nucleus. Functionally, involved in mitotic DNA repair and meiotic recombination. Functions in the recombinational DNA repair pathway. Essential for interhomolog gene conversion (GC), but may have a less important role in intersister GC than spn-A/Rad51. In the presence of DNA, spn-A/Rad51 enhances the ATPase activity of okr/Rad54. In Drosophila ananassae (Fruit fly), this protein is DNA repair and recombination protein RAD54-like.